The following is a 151-amino-acid chain: U-scoloptoxin(17)-Er2a (151 aa).

The signal sequence occupies residues 1–22 (MKSFFVVFAIVFQATLVALSLA).

The protein belongs to the scoloptoxin-17 family. In terms of processing, contains 5 disulfide bonds. As to expression, expressed by the venom gland.

The protein localises to the secreted. The chain is U-scoloptoxin(17)-Er2a from Ethmostigmus rubripes (Giant centipede).